Consider the following 214-residue polypeptide: Immunoglobulin lambda-like polypeptide 5 (214 aa).

The N-terminal stretch at 1 to 35 (MRPKTGQVGCETPEELGPGPRQRWPLLLLGLAMVA) is a signal peptide. Positions 98 to 109 (VFGTGTKVTVLG) are j region. A c region region spans residues 110-214 (QPKANPTVTL…EKTVAPTECS (105 aa)). In terms of domain architecture, Ig-like C1-type spans 115–209 (PTVTLFPPSS…EGSTVEKTVA (95 aa)). C136 and C195 form a disulfide bridge.

As to expression, contrary to IGLL1, not expressed in pre-B-cells.

The protein localises to the secreted. The sequence is that of Immunoglobulin lambda-like polypeptide 5 (IGLL5) from Homo sapiens (Human).